Here is a 264-residue protein sequence, read N- to C-terminus: Rano class II histocompatibility antigen, D-1 beta chain (264 aa).

The first 26 residues, 1 to 26, serve as a signal peptide directing secretion; it reads MVWLARDSCVAAVILLLTVLSPPVAL. The interval 27-120 is beta-1; sequence VRDPTPRFLE…EISESFLVPR (94 aa). Over 27-226 the chain is Extracellular; sequence VRDPTPRFLE…AQSTSAQNKK (200 aa). Disulfide bonds link C42–C106 and C144–C200. N-linked (GlcNAc...) asparagine glycosylation is present at N46. Residues 121 to 215 are beta-2; it reads TVEPKVTVYP…SLPSPVRVEW (95 aa). An Ig-like C1-type domain is found at 124-228; the sequence is PKVTVYPSKT…STSAQNKKMS (105 aa). The segment at 216-226 is connecting peptide; that stretch reads KAQSTSAQNKK. Residues 227–248 form a helical membrane-spanning segment; sequence MSGVGGIVLGLLFLGAGLFVYF. At 249 to 264 the chain is on the cytoplasmic side; it reads RNQKGQSGLQPTGLLN.

The protein belongs to the MHC class II family.

It localises to the membrane. In terms of biological role, involved in the presentation of foreign antigens to the immune system. The sequence is that of Rano class II histocompatibility antigen, D-1 beta chain (RT1-Db1) from Rattus norvegicus (Rat).